Consider the following 287-residue polypeptide: Cell division protein ZipA (287 aa).

Met1 is a topological domain (periplasmic). Residues 2–22 (EIGLREWLIVIGIIVIAGILF) traverse the membrane as a helical segment. Topologically, residues 23-287 (DGWRRMRGSK…ERRALTQRRG (265 aa)) are cytoplasmic. The tract at residues 48-140 (DEEETTSAEV…PTQRITEDKD (93 aa)) is disordered. Composition is skewed to basic and acidic residues over residues 64–77 (LDTHKEPQLDEHDL), 85–104 (REGKRSNSDKRSDKKRKDEP), and 121–140 (GRDDDFPDDKPTQRITEDKD).

The protein belongs to the ZipA family. Interacts with FtsZ via their C-terminal domains.

Its subcellular location is the cell inner membrane. Functionally, essential cell division protein that stabilizes the FtsZ protofilaments by cross-linking them and that serves as a cytoplasmic membrane anchor for the Z ring. Also required for the recruitment to the septal ring of downstream cell division proteins. This is Cell division protein ZipA from Pseudomonas syringae pv. syringae (strain B728a).